Reading from the N-terminus, the 187-residue chain is ADP-ribosylation factor-like protein 9 (187 aa).

Residues 25-32 (GLDGAGKT), 69-73 (EIGGS), and 126-129 (NKQD) contribute to the GTP site.

Belongs to the small GTPase superfamily. Arf family.

This is ADP-ribosylation factor-like protein 9 (ARL9) from Homo sapiens (Human).